A 453-amino-acid chain; its full sequence is Pre-mRNA-splicing factor prp46 (453 aa).

The span at 62-71 (EKQAKAAAAG) shows a compositional bias: low complexity. The tract at residues 62–129 (EKQAKAAAAG…PSATRQQRPD (68 aa)) is disordered. WD repeat units follow at residues 142–181 (GHLGWVRSLAVEPNNEWFASGAGDRTIKIWNLATGALRLT), 184–223 (GHISTVRGLAVSPRHPYLFSCGEDKMVKCWDLETNKVIRH), 226–265 (GHLSGVYTLALHPRLDLLVTGGRDGVARVWDMRTRSNIHV), 268–309 (GHKG…GVLT), 311–350 (HKKGVRNLAIHPREFTFASASTGSIKQWKCPEGDFMQNFE), 351–389 (GHNAVINSLAVNEDNVLFSGGDNGSMCFWDWKTGYKFQS), and 400–439 (DAEAGIMSATFDRTGLRLITGEADKTIKVWKPDDEATPES). A disordered region spans residues 432-453 (DDEATPESHPVTWAPTLGRQRY).

It belongs to the WD repeat PRL1/PRL2 family. In terms of assembly, associated with the spliceosome.

The protein localises to the cytoplasm. It is found in the nucleus. Functionally, involved in pre-mRNA splicing and required for cell cycle progression at G2/M. This is Pre-mRNA-splicing factor prp46 (prp46) from Aspergillus fumigatus (strain ATCC MYA-4609 / CBS 101355 / FGSC A1100 / Af293) (Neosartorya fumigata).